A 335-amino-acid chain; its full sequence is MRIAVDAMGGDHAPKSTVLGALAAIKENPAITVVLVGDEQAIRNHLPQDIPANIEIVPAAEVILPDDEPVRAVRRKKNSSLVVAVEMAREKKVDAMISAGNTGALMTAGLLYAGRMDGIERPALCAYIPNSKGRVTLTLDVGANMDAKPHQLVQYAVMGSLYAEKVLGFERPTVGLLNVGTEEGKGNELTKAVFPLLQEADLNFVGNVEARDVMQGACDVLVCDGFVGNVLLKAVEGAASTIFSQLKQEFTSSLINKLGAAILKPGLVRFKKKMDYAEYGGAPLLGLKSPVIKAHGSSNERAMKNAIVSATRFVQQDVNEVIQQSLQKNTLGESE.

This sequence belongs to the PlsX family. Homodimer. Probably interacts with PlsY.

The protein localises to the cytoplasm. It carries out the reaction a fatty acyl-[ACP] + phosphate = an acyl phosphate + holo-[ACP]. Its pathway is lipid metabolism; phospholipid metabolism. Its function is as follows. Catalyzes the reversible formation of acyl-phosphate (acyl-PO(4)) from acyl-[acyl-carrier-protein] (acyl-ACP). This enzyme utilizes acyl-ACP as fatty acyl donor, but not acyl-CoA. The sequence is that of Phosphate acyltransferase from Brevibacillus brevis (strain 47 / JCM 6285 / NBRC 100599).